We begin with the raw amino-acid sequence, 342 residues long: Holliday junction branch migration complex subunit RuvB (342 aa).

Residues 2-181 are large ATPase domain (RuvB-L); the sequence is TDNPLLSSAS…FGIPVRLQFY (180 aa). The ATP site is built by L20, R21, G62, K65, T66, T67, R171, Y181, and R218. Residue T66 coordinates Mg(2+). Residues 182–252 are small ATPAse domain (RuvB-S); the sequence is SVEELERVVA…IADNALTRLE (71 aa). A head domain (RuvB-H) region spans residues 255 to 342; the sequence is KIGLDLQDRR…QMPGLFGPDE (88 aa). 3 residues coordinate DNA: R291, R310, and R315.

The protein belongs to the RuvB family. In terms of assembly, homohexamer. Forms an RuvA(8)-RuvB(12)-Holliday junction (HJ) complex. HJ DNA is sandwiched between 2 RuvA tetramers; dsDNA enters through RuvA and exits via RuvB. An RuvB hexamer assembles on each DNA strand where it exits the tetramer. Each RuvB hexamer is contacted by two RuvA subunits (via domain III) on 2 adjacent RuvB subunits; this complex drives branch migration. In the full resolvosome a probable DNA-RuvA(4)-RuvB(12)-RuvC(2) complex forms which resolves the HJ.

It is found in the cytoplasm. It carries out the reaction ATP + H2O = ADP + phosphate + H(+). In terms of biological role, the RuvA-RuvB-RuvC complex processes Holliday junction (HJ) DNA during genetic recombination and DNA repair, while the RuvA-RuvB complex plays an important role in the rescue of blocked DNA replication forks via replication fork reversal (RFR). RuvA specifically binds to HJ cruciform DNA, conferring on it an open structure. The RuvB hexamer acts as an ATP-dependent pump, pulling dsDNA into and through the RuvAB complex. RuvB forms 2 homohexamers on either side of HJ DNA bound by 1 or 2 RuvA tetramers; 4 subunits per hexamer contact DNA at a time. Coordinated motions by a converter formed by DNA-disengaged RuvB subunits stimulates ATP hydrolysis and nucleotide exchange. Immobilization of the converter enables RuvB to convert the ATP-contained energy into a lever motion, pulling 2 nucleotides of DNA out of the RuvA tetramer per ATP hydrolyzed, thus driving DNA branch migration. The RuvB motors rotate together with the DNA substrate, which together with the progressing nucleotide cycle form the mechanistic basis for DNA recombination by continuous HJ branch migration. Branch migration allows RuvC to scan DNA until it finds its consensus sequence, where it cleaves and resolves cruciform DNA. The chain is Holliday junction branch migration complex subunit RuvB from Novosphingobium aromaticivorans (strain ATCC 700278 / DSM 12444 / CCUG 56034 / CIP 105152 / NBRC 16084 / F199).